A 293-amino-acid polypeptide reads, in one-letter code: 4-hydroxy-tetrahydrodipicolinate synthase (293 aa).

Thr-44 contacts pyruvate. Residue Tyr-132 is the Proton donor/acceptor of the active site. Lys-161 functions as the Schiff-base intermediate with substrate in the catalytic mechanism. Pyruvate is bound at residue Ile-203.

Belongs to the DapA family. As to quaternary structure, homotetramer; dimer of dimers.

It localises to the cytoplasm. The enzyme catalyses L-aspartate 4-semialdehyde + pyruvate = (2S,4S)-4-hydroxy-2,3,4,5-tetrahydrodipicolinate + H2O + H(+). It participates in amino-acid biosynthesis; L-lysine biosynthesis via DAP pathway; (S)-tetrahydrodipicolinate from L-aspartate: step 3/4. In terms of biological role, catalyzes the condensation of (S)-aspartate-beta-semialdehyde [(S)-ASA] and pyruvate to 4-hydroxy-tetrahydrodipicolinate (HTPA). This chain is 4-hydroxy-tetrahydrodipicolinate synthase, found in Sulfurihydrogenibium sp. (strain YO3AOP1).